A 283-amino-acid polypeptide reads, in one-letter code: Co-chaperone protein DjlA (283 aa).

Over 1–6 (MQIFGK) the chain is Periplasmic. The chain crosses the membrane as a helical span at residues 7–30 (ILGGFFGFLFGGFFGAALGIFIGH). The Cytoplasmic segment spans residues 31 to 283 (QFDKAKRMAN…DLIKKEKGIK (253 aa)). Residues 188–197 (QGGGFSGHQS) are compositionally biased toward gly residues. The interval 188 to 210 (QGGGFSGHQSGGSHQQGQWQQAS) is disordered. The segment covering 198–210 (GGSHQQGQWQQAS) has biased composition (low complexity). The region spanning 217–283 (DAYNLLGISE…DLIKKEKGIK (67 aa)) is the J domain.

Homodimer.

It localises to the cell inner membrane. Functionally, regulatory DnaK co-chaperone. Direct interaction between DnaK and DjlA is needed for the induction of the wcaABCDE operon, involved in the synthesis of a colanic acid polysaccharide capsule, possibly through activation of the RcsB/RcsC phosphotransfer signaling pathway. The colanic acid capsule may help the bacterium survive conditions outside the host. The polypeptide is Co-chaperone protein DjlA (Aliivibrio fischeri (strain ATCC 700601 / ES114) (Vibrio fischeri)).